We begin with the raw amino-acid sequence, 107 residues long: SH3 domain-binding glutamic acid-rich-like protein 2 (107 aa).

The SH3-binding motif lies at glutamine 61 to proline 67.

The protein belongs to the SH3BGR family.

It is found in the nucleus. This is SH3 domain-binding glutamic acid-rich-like protein 2 (SH3BGRL2) from Bos taurus (Bovine).